A 533-amino-acid polypeptide reads, in one-letter code: NADH-quinone oxidoreductase subunit N (533 aa).

Transmembrane regions (helical) follow at residues 13–33 (VWPL…EGFV), 40–60 (LVQA…TILV), 87–107 (PALF…LLFA), 141–161 (HTEV…FAAA), 164–184 (LLTL…LSGL), 200–220 (FMLG…VYGF), 243–263 (LLIG…AVPF), 275–295 (PTAV…GAML), 310–330 (QPML…IAIV), 337–357 (MLAY…LGVQ), 373–393 (VLFY…VVTL), 417–437 (VAGV…TAGF), 451–471 (GAWP…FFYV), and 502–522 (ATIF…GPVL).

This sequence belongs to the complex I subunit 2 family. In terms of assembly, NDH-1 is composed of 14 different subunits. Subunits NuoA, H, J, K, L, M, N constitute the membrane sector of the complex.

The protein localises to the cell membrane. It catalyses the reaction a quinone + NADH + 5 H(+)(in) = a quinol + NAD(+) + 4 H(+)(out). In terms of biological role, NDH-1 shuttles electrons from NADH, via FMN and iron-sulfur (Fe-S) centers, to quinones in the respiratory chain. The immediate electron acceptor for the enzyme in this species is believed to be a menaquinone. Couples the redox reaction to proton translocation (for every two electrons transferred, four hydrogen ions are translocated across the cytoplasmic membrane), and thus conserves the redox energy in a proton gradient. The chain is NADH-quinone oxidoreductase subunit N from Nocardioides sp. (strain ATCC BAA-499 / JS614).